Here is a 382-residue protein sequence, read N- to C-terminus: Anhydro-N-acetylmuramic acid kinase (382 aa).

9-16 (GTSLDGID) contributes to the ATP binding site.

Belongs to the anhydro-N-acetylmuramic acid kinase family.

It carries out the reaction 1,6-anhydro-N-acetyl-beta-muramate + ATP + H2O = N-acetyl-D-muramate 6-phosphate + ADP + H(+). It participates in amino-sugar metabolism; 1,6-anhydro-N-acetylmuramate degradation. Its pathway is cell wall biogenesis; peptidoglycan recycling. In terms of biological role, catalyzes the specific phosphorylation of 1,6-anhydro-N-acetylmuramic acid (anhMurNAc) with the simultaneous cleavage of the 1,6-anhydro ring, generating MurNAc-6-P. Is required for the utilization of anhMurNAc either imported from the medium or derived from its own cell wall murein, and thus plays a role in cell wall recycling. This Bacillus anthracis (strain A0248) protein is Anhydro-N-acetylmuramic acid kinase.